The primary structure comprises 318 residues: Aspartate carbamoyltransferase catalytic subunit (318 aa).

2 residues coordinate carbamoyl phosphate: Arg-54 and Thr-55. Position 82 (Lys-82) interacts with L-aspartate. Arg-104, His-134, and Gln-137 together coordinate carbamoyl phosphate. Residues Arg-174 and Arg-230 each contribute to the L-aspartate site. Carbamoyl phosphate is bound by residues Gly-271 and Pro-272.

It belongs to the aspartate/ornithine carbamoyltransferase superfamily. ATCase family. Heterododecamer (2C3:3R2) of six catalytic PyrB chains organized as two trimers (C3), and six regulatory PyrI chains organized as three dimers (R2).

It carries out the reaction carbamoyl phosphate + L-aspartate = N-carbamoyl-L-aspartate + phosphate + H(+). It participates in pyrimidine metabolism; UMP biosynthesis via de novo pathway; (S)-dihydroorotate from bicarbonate: step 2/3. Functionally, catalyzes the condensation of carbamoyl phosphate and aspartate to form carbamoyl aspartate and inorganic phosphate, the committed step in the de novo pyrimidine nucleotide biosynthesis pathway. This chain is Aspartate carbamoyltransferase catalytic subunit, found in Clavibacter michiganensis subsp. michiganensis (strain NCPPB 382).